Reading from the N-terminus, the 395-residue chain is Succinyl-diaminopimelate desuccinylase (395 aa).

His74 contributes to the Zn(2+) binding site. The active site involves Asp76. Zn(2+) is bound at residue Asp107. Residue Glu141 is the Proton acceptor of the active site. Zn(2+)-binding residues include Glu142, Glu170, and His368.

It belongs to the peptidase M20A family. DapE subfamily. As to quaternary structure, homodimer. Zn(2+) serves as cofactor. Co(2+) is required as a cofactor.

The catalysed reaction is N-succinyl-(2S,6S)-2,6-diaminopimelate + H2O = (2S,6S)-2,6-diaminopimelate + succinate. The protein operates within amino-acid biosynthesis; L-lysine biosynthesis via DAP pathway; LL-2,6-diaminopimelate from (S)-tetrahydrodipicolinate (succinylase route): step 3/3. In terms of biological role, catalyzes the hydrolysis of N-succinyl-L,L-diaminopimelic acid (SDAP), forming succinate and LL-2,6-diaminopimelate (DAP), an intermediate involved in the bacterial biosynthesis of lysine and meso-diaminopimelic acid, an essential component of bacterial cell walls. In Chelativorans sp. (strain BNC1), this protein is Succinyl-diaminopimelate desuccinylase.